Here is a 239-residue protein sequence, read N- to C-terminus: Peptidyl-tRNA hydrolase (239 aa).

Position 14 (Y14) interacts with tRNA. The active-site Proton acceptor is H19. Residues F64, N66, and N112 each contribute to the tRNA site. The interval 188–239 (APPRSSTSKPKAQDNREDAAQAAEERSETRTPPEARPEDTRSALQKLADKFR) is disordered. Over residues 198-239 (KAQDNREDAAQAAEERSETRTPPEARPEDTRSALQKLADKFR) the composition is skewed to basic and acidic residues.

This sequence belongs to the PTH family. Monomer.

The protein localises to the cytoplasm. It catalyses the reaction an N-acyl-L-alpha-aminoacyl-tRNA + H2O = an N-acyl-L-amino acid + a tRNA + H(+). In terms of biological role, hydrolyzes ribosome-free peptidyl-tRNAs (with 1 or more amino acids incorporated), which drop off the ribosome during protein synthesis, or as a result of ribosome stalling. Its function is as follows. Catalyzes the release of premature peptidyl moieties from peptidyl-tRNA molecules trapped in stalled 50S ribosomal subunits, and thus maintains levels of free tRNAs and 50S ribosomes. The chain is Peptidyl-tRNA hydrolase from Jannaschia sp. (strain CCS1).